Reading from the N-terminus, the 189-residue chain is Calcyphosin (189 aa).

EF-hand domains follow at residues 21–56 (SGIQ…LGLV), 57–92 (LDTA…PMSQ), 93–128 (AREA…RTHP), and 136–172 (TEEQ…VSAS). Residues D34, D36, S38, S40, E45, D70, D72, S74, T76, E81, D106, S108, D110, and D117 each coordinate Ca(2+). Residue S40 is modified to Phosphoserine; by PKA.

In terms of assembly, monomer. Does not form oligomers in the presence of calcium.

It localises to the cytoplasm. Its function is as follows. Calcium-binding protein. May play a role in cellular signaling events (Potential). This Bos taurus (Bovine) protein is Calcyphosin (CAPS).